We begin with the raw amino-acid sequence, 199 residues long: Fe/S biogenesis protein NfuA (199 aa).

[4Fe-4S] cluster is bound by residues Cys151 and Cys154.

It belongs to the NfuA family. Homodimer. [4Fe-4S] cluster serves as cofactor.

In terms of biological role, involved in iron-sulfur cluster biogenesis. Binds a 4Fe-4S cluster, can transfer this cluster to apoproteins, and thereby intervenes in the maturation of Fe/S proteins. Could also act as a scaffold/chaperone for damaged Fe/S proteins. The protein is Fe/S biogenesis protein NfuA of Stenotrophomonas maltophilia (strain R551-3).